Consider the following 37-residue polypeptide: Mating pheromone Er-20 (37 aa).

Intrachain disulfides connect C3–C18, C10–C32, and C15–C24.

In terms of assembly, homodimer.

It is found in the secreted. Mating ciliate pheromones (or gamones) are diffusible extracellular communication signals that distinguish different intraspecific classes of cells commonly referred to as 'mating types'. They prepare the latter for conjugation by changing their cell surface properties. The protein is Mating pheromone Er-20 (MAT20) of Euplotes raikovi.